The chain runs to 138 residues: 1,4-dihydroxy-2-naphthoyl-CoA hydrolase (138 aa).

Asp15 is a catalytic residue.

It belongs to the 4-hydroxybenzoyl-CoA thioesterase family. DHNA-CoA hydrolase subfamily.

The catalysed reaction is 1,4-dihydroxy-2-naphthoyl-CoA + H2O = 1,4-dihydroxy-2-naphthoate + CoA + H(+). Its pathway is cofactor biosynthesis; phylloquinone biosynthesis. The protein operates within quinol/quinone metabolism; 1,4-dihydroxy-2-naphthoate biosynthesis; 1,4-dihydroxy-2-naphthoate from chorismate: step 7/7. Catalyzes the hydrolysis of 1,4-dihydroxy-2-naphthoyl-CoA (DHNA-CoA) to 1,4-dihydroxy-2-naphthoate (DHNA), a reaction involved in phylloquinone (vitamin K1) biosynthesis. The protein is 1,4-dihydroxy-2-naphthoyl-CoA hydrolase of Trichodesmium erythraeum (strain IMS101).